Reading from the N-terminus, the 444-residue chain is Abhydrolase domain-containing protein abhd-5.2 (444 aa).

Residues 162 to 409 (PIVLIHGFGA…SAGHHVYADD (248 aa)) enclose the AB hydrolase-1 domain.

The protein belongs to the peptidase S33 family. ABHD4/ABHD5 subfamily. Interacts with atgl-1; the interaction tethers atgl-1 to lipid droplets. As to expression, expressed in the hypodermis and intestine.

The protein localises to the lipid droplet. Acts coordinately with phospholipase atgl-1 within the lipolytic cascade to distribute stored energy to tissues to maintain energy levels during the dauer phase. Localizes atgl-1 to lipid droplets, possibly to facilitate triglyceride hydrolysis. Regulates lipid droplet size, lipid content, the exchange of lipids between lipid droplets and fusion of lipid droplets during the dauer phase. In Caenorhabditis elegans, this protein is Abhydrolase domain-containing protein abhd-5.2.